The sequence spans 291 residues: Nucleotide-binding protein lin2617 (291 aa).

Residue 13–20 (GMSGAGKT) participates in ATP binding. 63–66 (DLRG) is a binding site for GTP.

The protein belongs to the RapZ-like family.

Its function is as follows. Displays ATPase and GTPase activities. In Listeria innocua serovar 6a (strain ATCC BAA-680 / CLIP 11262), this protein is Nucleotide-binding protein lin2617.